A 141-amino-acid chain; its full sequence is HTH-type transcriptional repressor NsrR (141 aa).

An HTH rrf2-type domain is found at glutamine 2–threonine 129. Residues isoleucine 28–glutamine 51 constitute a DNA-binding region (H-T-H motif). [2Fe-2S] cluster is bound by residues cysteine 91, cysteine 96, and cysteine 102.

[2Fe-2S] cluster is required as a cofactor.

Its function is as follows. Nitric oxide-sensitive repressor of genes involved in protecting the cell against nitrosative stress. May require iron for activity. The protein is HTH-type transcriptional repressor NsrR of Aliivibrio salmonicida (strain LFI1238) (Vibrio salmonicida (strain LFI1238)).